A 226-amino-acid polypeptide reads, in one-letter code: Cell division protein SepF (226 aa).

A disordered region spans residues R20–N116. Residues Y22–E44 show a composition bias toward basic and acidic residues. The segment covering D45–A56 has biased composition (acidic residues). The span at R62–S95 shows a compositional bias: basic and acidic residues. A compositionally biased stretch (polar residues) spans R97–Y111.

It belongs to the SepF family. Homodimer. Interacts with FtsZ.

It is found in the cytoplasm. Its function is as follows. Cell division protein that is part of the divisome complex and is recruited early to the Z-ring. Probably stimulates Z-ring formation, perhaps through the cross-linking of FtsZ protofilaments. Its function overlaps with FtsA. The polypeptide is Cell division protein SepF (Salinispora arenicola (strain CNS-205)).